A 106-amino-acid chain; its full sequence is Small ribosomal subunit protein bS16 (106 aa).

Positions 84–106 (KREARNNPEKAVPRKERKAADGK) are disordered.

The polypeptide is Small ribosomal subunit protein bS16 (Rhodopseudomonas palustris (strain ATCC BAA-98 / CGA009)).